The primary structure comprises 312 residues: MTAAPAAANNAAPAPKTPRRGVLAAYLALTKPRVIELLLVTTVPAMFLAQRGIPSPWLVLVTLAGGAMSAGSANALNCVADSDIDAVMDRTKKRPLVSYEVPRRSALVFGIVLGVVSFAVLALGANLLAAVLSLAAILFYVFVYTLVLKRRTSQNIVWGGAAGCMPVVIGWAAVTGSVEWPALVMFGVVFLWTPPHFWSLAMKYREDYARAGVPMLPVVATPRQVSARILVYSWATVACTLLLVPATSWVYVAFAVLAGAAFLIVAQRLHNSIRRGHAYNPMKLFHLSNSYLALLFVAIAVDSAVGLPSFVA.

9 consecutive transmembrane segments (helical) span residues 21–41, 53–73, 105–125, 127–147, 156–176, 182–202, 225–245, 246–266, and 292–312; these read GVLA…LLVT, IPSP…AGSA, SALV…ALGA, LLAA…YTLV, IVWG…AVTG, ALVM…SLAM, VSAR…LLVP, ATSW…LIVA, and LALL…SFVA.

This sequence belongs to the UbiA prenyltransferase family. Protoheme IX farnesyltransferase subfamily.

The protein resides in the cell membrane. It carries out the reaction heme b + (2E,6E)-farnesyl diphosphate + H2O = Fe(II)-heme o + diphosphate. It functions in the pathway porphyrin-containing compound metabolism; heme O biosynthesis; heme O from protoheme: step 1/1. Its function is as follows. Converts heme B (protoheme IX) to heme O by substitution of the vinyl group on carbon 2 of heme B porphyrin ring with a hydroxyethyl farnesyl side group. The protein is Protoheme IX farnesyltransferase 1 of Saccharopolyspora erythraea (strain ATCC 11635 / DSM 40517 / JCM 4748 / NBRC 13426 / NCIMB 8594 / NRRL 2338).